The following is a 450-amino-acid chain: Phosphoglucosamine mutase (450 aa).

Ser102 (phosphoserine intermediate) is an active-site residue. Ser102, Asp244, Asp246, and Asp248 together coordinate Mg(2+). The residue at position 102 (Ser102) is a Phosphoserine.

Belongs to the phosphohexose mutase family. Mg(2+) is required as a cofactor. Activated by phosphorylation.

It catalyses the reaction alpha-D-glucosamine 1-phosphate = D-glucosamine 6-phosphate. Catalyzes the conversion of glucosamine-6-phosphate to glucosamine-1-phosphate. This Solidesulfovibrio magneticus (strain ATCC 700980 / DSM 13731 / RS-1) (Desulfovibrio magneticus) protein is Phosphoglucosamine mutase.